The chain runs to 461 residues: Nuclear distribution protein PAC1 (461 aa).

The stretch at 64-93 forms a coiled coil; sequence NSIIRLHRKILDLEQKCQQLTEELEAVPTE. WD repeat units follow at residues 118–157, 161–203, 209–252, 254–292, 318–362, 382–421, and 423–461; these read DVGA…MPLH, AHMK…AFQL, SHEH…KSFQ, HNQW…SMAV, DDQV…FIPH, GHTS…KVWP, and ASHG…VFMR.

This sequence belongs to the WD repeat LIS1/nudF family. In terms of assembly, self-associates. Interacts with NDL1 and dynein.

It localises to the cytoplasm. The protein localises to the cytoskeleton. Its subcellular location is the spindle pole. Its function is as follows. Positively regulates the activity of the minus-end directed microtubule motor protein dynein. Plays a central role in positioning the mitotic spindle at the bud neck during cell division. Targets cytoplasmic dynein to microtubule plus ends, thereby promoting dynein-mediated microtubule sliding along the bud cortex and consequently the movement of the mitotic spindle to the bud neck. The polypeptide is Nuclear distribution protein PAC1 (Eremothecium gossypii (strain ATCC 10895 / CBS 109.51 / FGSC 9923 / NRRL Y-1056) (Yeast)).